Consider the following 424-residue polypeptide: L-glutamine:2-deoxy-scyllo-inosose aminotransferase (424 aa).

Lysine 202 carries the N6-(pyridoxal phosphate)lysine modification.

Belongs to the DegT/DnrJ/EryC1 family. L-glutamine:2-deoxy-scyllo-inosose/scyllo-inosose aminotransferase subfamily. Pyridoxal 5'-phosphate is required as a cofactor.

It carries out the reaction 2-deoxy-L-scyllo-inosose + L-glutamine = 2-deoxy-scyllo-inosamine + 2-oxoglutaramate. The catalysed reaction is 3-amino-2,3-dideoxy-scyllo-inosose + L-glutamine = 2-deoxystreptamine + 2-oxoglutaramate. It participates in metabolic intermediate biosynthesis; 2-deoxystreptamine biosynthesis; 2-deoxystreptamine from D-glucose 6-phosphate: step 2/4. It functions in the pathway antibiotic biosynthesis; lividomycin biosynthesis. In terms of biological role, catalyzes the PLP-dependent transamination of 2-deoxy-scyllo-inosose (2-DOI) to form 2-deoxy-scyllo-inosamine (2-DOIA) using L-glutamine as the amino donor. Also catalyzes the transamination of 3-amino-2,3-dideoxy-scyllo-inosose (keto-2-DOIA) into 2-deoxystreptamine (2-DOS). This chain is L-glutamine:2-deoxy-scyllo-inosose aminotransferase (livS), found in Streptomyces lividus.